The sequence spans 382 residues: Mannitol-1-phosphate 5-dehydrogenase (382 aa).

3–14 is a binding site for NAD(+); that stretch reads ALHFGAGNIGRG.

This sequence belongs to the mannitol dehydrogenase family.

The catalysed reaction is D-mannitol 1-phosphate + NAD(+) = beta-D-fructose 6-phosphate + NADH + H(+). This Salmonella typhi protein is Mannitol-1-phosphate 5-dehydrogenase.